A 300-amino-acid chain; its full sequence is Transcription initiation factor IIB (300 aa).

Residues 2-34 form a TFIIB-type zinc finger; it reads NKQKVCPACESAELIYDPERGEIVCAKCGYVIE. Residues C7, C10, C26, and C29 each coordinate Zn(2+). 2 repeat units span residues 114-197 and 210-291.

Belongs to the TFIIB family.

Its function is as follows. Stabilizes TBP binding to an archaeal box-A promoter. Also responsible for recruiting RNA polymerase II to the pre-initiation complex (DNA-TBP-TFIIB). The protein is Transcription initiation factor IIB of Pyrococcus furiosus (strain ATCC 43587 / DSM 3638 / JCM 8422 / Vc1).